The sequence spans 71 residues: Protein translocase subunit SecE (71 aa).

The chain crosses the membrane as a helical span at residues valine 43–threonine 63.

Belongs to the SecE/SEC61-gamma family. Component of the Sec protein translocase complex. Heterotrimer consisting of SecY (alpha), SecG (beta) and SecE (gamma) subunits. The heterotrimers can form oligomers, although 1 heterotrimer is thought to be able to translocate proteins. Interacts with the ribosome. May interact with SecDF, and other proteins may be involved.

It is found in the cell membrane. Its function is as follows. Essential subunit of the Sec protein translocation channel SecYEG. Clamps together the 2 halves of SecY. May contact the channel plug during translocation. The sequence is that of Protein translocase subunit SecE from Methanosarcina mazei (strain ATCC BAA-159 / DSM 3647 / Goe1 / Go1 / JCM 11833 / OCM 88) (Methanosarcina frisia).